Here is a 498-residue protein sequence, read N- to C-terminus: Lipase 3 (498 aa).

Cys60 and Cys91 are disulfide-bonded. Asn193 carries an N-linked (GlcNAc...) asparagine glycan. The Acyl-ester intermediate role is filled by Ser200. Asn384 is a glycosylation site (N-linked (GlcNAc...) asparagine). The active-site Charge relay system is His409. Residue Asn418 is glycosylated (N-linked (GlcNAc...) asparagine).

This sequence belongs to the type-B carboxylesterase/lipase family.

The enzyme catalyses a triacylglycerol + H2O = a diacylglycerol + a fatty acid + H(+). The sequence is that of Lipase 3 (LIP3) from Yarrowia lipolytica (strain CLIB 122 / E 150) (Yeast).